A 701-amino-acid polypeptide reads, in one-letter code: Glycine--tRNA ligase beta subunit (701 aa).

It belongs to the class-II aminoacyl-tRNA synthetase family. As to quaternary structure, tetramer of two alpha and two beta subunits.

It localises to the cytoplasm. It catalyses the reaction tRNA(Gly) + glycine + ATP = glycyl-tRNA(Gly) + AMP + diphosphate. The polypeptide is Glycine--tRNA ligase beta subunit (Bradyrhizobium sp. (strain BTAi1 / ATCC BAA-1182)).